We begin with the raw amino-acid sequence, 315 residues long: Deoxyribonuclease-1-like 1 (315 aa).

A signal peptide spans 1–29; the sequence is MDSSGGFQKHTCGHALLLLLLLLAGGAEA. Catalysis depends on residues glutamate 108 and histidine 159. A disulfide bridge connects residues cysteine 198 and cysteine 235. Asparagine 272 carries N-linked (GlcNAc...) asparagine glycosylation.

Belongs to the DNase I family.

It is found in the endoplasmic reticulum. The chain is Deoxyribonuclease-1-like 1 (DNASE1L1) from Sus scrofa (Pig).